We begin with the raw amino-acid sequence, 194 residues long: MKTILSSETMDIPDSVTIKVHAKVIEVEGPRGKLVRDFKHLNLDFQLIKDPETGKKKLKIDSWFGTRKTSASIRTALSHVDNLISGVTRGFRYKMRFVYAHFPINASIGGDGKSIEIRNFLGEKKVRKVEMLDGVTIVRSEKVKDEIVLDGNDIELVSRSCALINQKCHVKKKDIRKFLDGIYVSEKSKIVEEE.

At Thr-75 the chain carries Phosphothreonine.

Belongs to the universal ribosomal protein uL6 family.

This chain is Large ribosomal subunit protein uL6z/uL6y (RPL9B), found in Arabidopsis thaliana (Mouse-ear cress).